The following is a 139-amino-acid chain: ATP synthase epsilon chain (139 aa).

This sequence belongs to the ATPase epsilon chain family. F-type ATPases have 2 components, CF(1) - the catalytic core - and CF(0) - the membrane proton channel. CF(1) has five subunits: alpha(3), beta(3), gamma(1), delta(1), epsilon(1). CF(0) has three main subunits: a, b and c.

Its subcellular location is the cell inner membrane. Functionally, produces ATP from ADP in the presence of a proton gradient across the membrane. The polypeptide is ATP synthase epsilon chain (Salmonella arizonae (strain ATCC BAA-731 / CDC346-86 / RSK2980)).